The sequence spans 506 residues: Cysteine protease 1 (506 aa).

The disordered stretch occupies residues 1-21 (MTSSRPSGRDSTGWQETVSNT). C226 (nucleophile) is an active-site residue. Residues D399 and H401 contribute to the active site.

This sequence belongs to the peptidase C54 family.

Its subcellular location is the cytoplasm. The protein resides in the nucleus. The protein localises to the preautophagosomal structure. The enzyme catalyses [protein]-C-terminal L-amino acid-glycyl-phosphatidylethanolamide + H2O = [protein]-C-terminal L-amino acid-glycine + a 1,2-diacyl-sn-glycero-3-phosphoethanolamine. Cysteine protease that plays a key role in cytoplasm to vacuole transport (Cvt) and autophagy by mediating both proteolytic activation and delipidation of ATG8. Required for selective autophagic degradation of the nucleus (nucleophagy) as well as for mitophagy which contributes to regulate mitochondrial quantity and quality by eliminating the mitochondria to a basal level to fulfill cellular energy requirements and preventing excess ROS production. The protease activity is required for proteolytic activation of ATG8: cleaves the C-terminal amino acid of ATG8 to reveal a C-terminal glycine. ATG8 ubiquitin-like activity requires the exposure of the glycine at the C-terminus for its conjugation to phosphatidylethanolamine (PE) and its insertion to membranes, which is necessary for autophagy. The ATG8-PE conjugate mediates tethering between adjacent membranes and stimulates membrane hemifusion, leading to expansion of the autophagosomal membrane during autophagy. In addition to the protease activity, also catalyzes deconjugation of PE-conjugated forms of ATG8 during macroautophagy: ATG8 delipidation is required to release the protein from membranes, which facilitates multiple events during macroautophagy, and especially for efficient autophagosome biogenesis, the assembly of ATG9-containing tubulovesicular clusters into phagophores/autophagosomes, and for the disassembly of PAS-associated ATG components. ATG8 delipidation by ATG4 also recycles ATG8-PE generated on inappropriate membranes to maintain a reservoir of unlipidated ATG8 that is required for autophagosome formation at the PAS. This is Cysteine protease 1 (cpr-1) from Neurospora crassa (strain ATCC 24698 / 74-OR23-1A / CBS 708.71 / DSM 1257 / FGSC 987).